Consider the following 261-residue polypeptide: Cytochrome c oxidase subunit 3 (261 aa).

The Mitochondrial matrix segment spans residues 1–15 (MTHQSHAYHMVKPSP). A helical membrane pass occupies residues 16–34 (WPLTGALSALLMTSGLAMW). At 35–40 (FHFYST) the chain is on the mitochondrial intermembrane side. Residues 41-66 (TLLTLGLLTNTLTMYQWWRDVMREGT) form a helical membrane-spanning segment. Topologically, residues 67 to 72 (YQGHHT) are mitochondrial matrix. The chain crosses the membrane as a helical span at residues 73–105 (PPVQKGLRYGMILFITSEVFFFAGFFWAFYHSS). Residues 106–128 (LAPTPQLGGHWPPTGITPLNPLE) lie on the Mitochondrial intermembrane side of the membrane. The chain crosses the membrane as a helical span at residues 129-152 (VPLLNTSVLLASGVSITWAHHSLM). Residues 153–155 (ENN) lie on the Mitochondrial matrix side of the membrane. Residues 156–183 (RNQMIQALLITILLGLYFTLLQASEYFE) traverse the membrane as a helical segment. Residues 184–190 (SPFTISD) are Mitochondrial intermembrane-facing. The chain crosses the membrane as a helical span at residues 191–223 (GIYGSTFFVATGFHGLHVIIGSTFLTICLIRQL). Residues 224–232 (MFHFTSKHH) are Mitochondrial matrix-facing. A helical membrane pass occupies residues 233–256 (FGFQAAAWYWHFVDVVWLFLYVSI). Topologically, residues 257 to 261 (YWWGS) are mitochondrial intermembrane.

This sequence belongs to the cytochrome c oxidase subunit 3 family. As to quaternary structure, component of the cytochrome c oxidase (complex IV, CIV), a multisubunit enzyme composed of 14 subunits. The complex is composed of a catalytic core of 3 subunits MT-CO1, MT-CO2 and MT-CO3, encoded in the mitochondrial DNA, and 11 supernumerary subunits COX4I, COX5A, COX5B, COX6A, COX6B, COX6C, COX7A, COX7B, COX7C, COX8 and NDUFA4, which are encoded in the nuclear genome. The complex exists as a monomer or a dimer and forms supercomplexes (SCs) in the inner mitochondrial membrane with NADH-ubiquinone oxidoreductase (complex I, CI) and ubiquinol-cytochrome c oxidoreductase (cytochrome b-c1 complex, complex III, CIII), resulting in different assemblies (supercomplex SCI(1)III(2)IV(1) and megacomplex MCI(2)III(2)IV(2)).

The protein resides in the mitochondrion inner membrane. The enzyme catalyses 4 Fe(II)-[cytochrome c] + O2 + 8 H(+)(in) = 4 Fe(III)-[cytochrome c] + 2 H2O + 4 H(+)(out). Functionally, component of the cytochrome c oxidase, the last enzyme in the mitochondrial electron transport chain which drives oxidative phosphorylation. The respiratory chain contains 3 multisubunit complexes succinate dehydrogenase (complex II, CII), ubiquinol-cytochrome c oxidoreductase (cytochrome b-c1 complex, complex III, CIII) and cytochrome c oxidase (complex IV, CIV), that cooperate to transfer electrons derived from NADH and succinate to molecular oxygen, creating an electrochemical gradient over the inner membrane that drives transmembrane transport and the ATP synthase. Cytochrome c oxidase is the component of the respiratory chain that catalyzes the reduction of oxygen to water. Electrons originating from reduced cytochrome c in the intermembrane space (IMS) are transferred via the dinuclear copper A center (CU(A)) of subunit 2 and heme A of subunit 1 to the active site in subunit 1, a binuclear center (BNC) formed by heme A3 and copper B (CU(B)). The BNC reduces molecular oxygen to 2 water molecules using 4 electrons from cytochrome c in the IMS and 4 protons from the mitochondrial matrix. In Pan troglodytes (Chimpanzee), this protein is Cytochrome c oxidase subunit 3 (MT-CO3).